We begin with the raw amino-acid sequence, 217 residues long: Monomethylamine corrinoid protein 2 (217 aa).

In terms of domain architecture, B12-binding N-terminal spans 1-91 (MTNTEIFEKL…ELEKSKVEGE (91 aa)). Residues 93–217 (TGLAITFVAE…AAKVALNIMK (125 aa)) form the B12-binding domain. Histidine 106 is a binding site for methylcob(III)alamin.

It belongs to the methylamine corrinoid protein family. As to quaternary structure, can form a complex with MtmB.

It functions in the pathway one-carbon metabolism; methanogenesis from methylamine. Functionally, acts as a methyl group carrier between MtmB and MtbA. The chain is Monomethylamine corrinoid protein 2 (mtmC2) from Methanosarcina acetivorans (strain ATCC 35395 / DSM 2834 / JCM 12185 / C2A).